The sequence spans 351 residues: Methionine import ATP-binding protein MetN (351 aa).

Residues 2–241 enclose the ABC transporter domain; it reads IVTEALTKAF…PQHAVTRAFV (240 aa). Position 38-45 (38-45) interacts with ATP; that stretch reads GRSGAGKS.

This sequence belongs to the ABC transporter superfamily. Methionine importer (TC 3.A.1.24) family. As to quaternary structure, the complex is composed of two ATP-binding proteins (MetN), two transmembrane proteins (MetI) and a solute-binding protein (MetQ).

It localises to the cell inner membrane. It carries out the reaction L-methionine(out) + ATP + H2O = L-methionine(in) + ADP + phosphate + H(+). The catalysed reaction is D-methionine(out) + ATP + H2O = D-methionine(in) + ADP + phosphate + H(+). Its function is as follows. Part of the ABC transporter complex MetNIQ involved in methionine import. Responsible for energy coupling to the transport system. This Rhodospirillum rubrum (strain ATCC 11170 / ATH 1.1.1 / DSM 467 / LMG 4362 / NCIMB 8255 / S1) protein is Methionine import ATP-binding protein MetN.